A 253-amino-acid chain; its full sequence is ATP synthase subunit a (253 aa).

6 helical membrane passes run 30–50 (FTNA…VLLA), 88–108 (FFPF…IGLV), 118–138 (IAVT…YGLI), 144–164 (FLGI…MIMI), 184–204 (MLAG…LLGA), and 211–231 (VAPL…LVAF).

It belongs to the ATPase A chain family. In terms of assembly, F-type ATPases have 2 components, CF(1) - the catalytic core - and CF(0) - the membrane proton channel. CF(1) has five subunits: alpha(3), beta(3), gamma(1), delta(1), epsilon(1). CF(0) has three main subunits: a(1), b(2) and c(9-12). The alpha and beta chains form an alternating ring which encloses part of the gamma chain. CF(1) is attached to CF(0) by a central stalk formed by the gamma and epsilon chains, while a peripheral stalk is formed by the delta and b chains.

The protein resides in the cell inner membrane. Key component of the proton channel; it plays a direct role in the translocation of protons across the membrane. The sequence is that of ATP synthase subunit a from Beijerinckia indica subsp. indica (strain ATCC 9039 / DSM 1715 / NCIMB 8712).